We begin with the raw amino-acid sequence, 239 residues long: Small ribosomal subunit protein eS6B (239 aa).

Phosphoserine is present on residues Ser-148, Ser-235, and Ser-236.

The protein belongs to the eukaryotic ribosomal protein eS6 family. Component of the small ribosomal subunit (SSU). Mature yeast ribosomes consist of a small (40S) and a large (60S) subunit. The 40S small subunit contains 1 molecule of ribosomal RNA (18S rRNA) and at least 33 different proteins. The large 60S subunit contains 3 rRNA molecules (25S, 5.8S and 5S rRNA) and at least 46 different proteins. Interacts with snoRNA U3. uS11 interacts with MPP10. Component of the ribosomal small subunit (SSU) processome composed of at least 40 protein subunits and snoRNA U3.

It is found in the cytoplasm. Functionally, component of the ribosome, a large ribonucleoprotein complex responsible for the synthesis of proteins in the cell. The small ribosomal subunit (SSU) binds messenger RNAs (mRNAs) and translates the encoded message by selecting cognate aminoacyl-transfer RNA (tRNA) molecules. The large subunit (LSU) contains the ribosomal catalytic site termed the peptidyl transferase center (PTC), which catalyzes the formation of peptide bonds, thereby polymerizing the amino acids delivered by tRNAs into a polypeptide chain. The nascent polypeptides leave the ribosome through a tunnel in the LSU and interact with protein factors that function in enzymatic processing, targeting, and the membrane insertion of nascent chains at the exit of the ribosomal tunnel. eS6 is involved in nucleolar processing of pre-18S ribosomal RNA and ribosome assembly. This Schizosaccharomyces pombe (strain 972 / ATCC 24843) (Fission yeast) protein is Small ribosomal subunit protein eS6B (rps602).